The chain runs to 397 residues: Dual-specificity RNA methyltransferase RlmN (397 aa).

The Proton acceptor role is filled by glutamate 116. Residues 122–366 (EDDRGTLCIS…SPIRKTRGDD (245 aa)) enclose the Radical SAM core domain. A disulfide bridge connects residues cysteine 129 and cysteine 371. 3 residues coordinate [4Fe-4S] cluster: cysteine 136, cysteine 140, and cysteine 143. Residues 195-196 (GE), serine 227, 249-251 (SFH), and asparagine 328 contribute to the S-adenosyl-L-methionine site. Residue cysteine 371 is the S-methylcysteine intermediate of the active site.

Belongs to the radical SAM superfamily. RlmN family. Requires [4Fe-4S] cluster as cofactor.

Its subcellular location is the cytoplasm. The enzyme catalyses adenosine(2503) in 23S rRNA + 2 reduced [2Fe-2S]-[ferredoxin] + 2 S-adenosyl-L-methionine = 2-methyladenosine(2503) in 23S rRNA + 5'-deoxyadenosine + L-methionine + 2 oxidized [2Fe-2S]-[ferredoxin] + S-adenosyl-L-homocysteine. The catalysed reaction is adenosine(37) in tRNA + 2 reduced [2Fe-2S]-[ferredoxin] + 2 S-adenosyl-L-methionine = 2-methyladenosine(37) in tRNA + 5'-deoxyadenosine + L-methionine + 2 oxidized [2Fe-2S]-[ferredoxin] + S-adenosyl-L-homocysteine. Specifically methylates position 2 of adenine 2503 in 23S rRNA and position 2 of adenine 37 in tRNAs. m2A2503 modification seems to play a crucial role in the proofreading step occurring at the peptidyl transferase center and thus would serve to optimize ribosomal fidelity. The protein is Dual-specificity RNA methyltransferase RlmN of Ruegeria sp. (strain TM1040) (Silicibacter sp.).